The following is a 124-amino-acid chain: Non-structural protein 2 (124 aa).

A DLNP; interaction with MAP1B motif is present at residues 121 to 124 (DLNP).

The protein belongs to the pneumovirus non-structural protein 2 family. In terms of assembly, monomer (instable). Homomultimer. Heteromultimer with NS1. Interacts with host RIGI (via N-terminus); this interaction prevents host signaling pathway involved in interferon production. Interacts with host MAP1B/microtubule-associated protein 1B.

The protein resides in the host mitochondrion. Functionally, plays a major role in antagonizing the type I IFN-mediated antiviral response. Acts cooperatively with NS1 to repress activation and nuclear translocation of host IFN-regulatory factor IRF3. Interacts with the host cytoplasmic sensor of viral nucleic acids RIGI and prevents the interaction with its downstream partner MAVS. Together with NS2, participates in the proteasomal degradation of host STAT2, IRF3, IRF7, TBK1 and RIGI through a NS-degradasome involving CUL2 and Elongin-C. The degradasome requires an intact mitochondrial MAVS. Induces host SOCS1 expression. Induces activation of NF-kappa-B. Suppresses premature apoptosis by an NF-kappa-B-dependent, interferon-independent mechanism promoting continued viral replication. In Bos taurus (Bovine), this protein is Non-structural protein 2 (1B).